The chain runs to 39 residues: Photosystem II reaction center protein L (39 aa).

A helical membrane pass occupies residues 18–38; the sequence is SLYLGLLLIAVLGILFSSYFF.

Belongs to the PsbL family. PSII is composed of 1 copy each of membrane proteins PsbA, PsbB, PsbC, PsbD, PsbE, PsbF, PsbH, PsbI, PsbJ, PsbK, PsbL, PsbM, PsbT, PsbX, PsbY, PsbZ, Psb30/Ycf12, peripheral proteins PsbO, CyanoQ (PsbQ), PsbU, PsbV and a large number of cofactors. It forms dimeric complexes.

Its subcellular location is the cellular thylakoid membrane. In terms of biological role, one of the components of the core complex of photosystem II (PSII). PSII is a light-driven water:plastoquinone oxidoreductase that uses light energy to abstract electrons from H(2)O, generating O(2) and a proton gradient subsequently used for ATP formation. It consists of a core antenna complex that captures photons, and an electron transfer chain that converts photonic excitation into a charge separation. This subunit is found at the monomer-monomer interface and is required for correct PSII assembly and/or dimerization. This is Photosystem II reaction center protein L from Crocosphaera subtropica (strain ATCC 51142 / BH68) (Cyanothece sp. (strain ATCC 51142)).